A 432-amino-acid polypeptide reads, in one-letter code: D-amino acid dehydrogenase (432 aa).

3–17 contributes to the FAD binding site; sequence VVILGSGVVGVASAW.

The protein belongs to the DadA oxidoreductase family. FAD serves as cofactor.

It catalyses the reaction a D-alpha-amino acid + A + H2O = a 2-oxocarboxylate + AH2 + NH4(+). It functions in the pathway amino-acid degradation; D-alanine degradation; NH(3) and pyruvate from D-alanine: step 1/1. Functionally, oxidative deamination of D-amino acids. The sequence is that of D-amino acid dehydrogenase from Shigella boydii serotype 18 (strain CDC 3083-94 / BS512).